Consider the following 421-residue polypeptide: Phosphoribosylamine--glycine ligase (421 aa).

Positions 108–314 (KEIMVKYNVP…FAQNIDDIMM (207 aa)) constitute an ATP-grasp domain. 134-195 (IEEQGAPIVV…EEFLDGEEFS (62 aa)) is a binding site for ATP. Mg(2+) contacts are provided by Glu284 and Asn286.

Belongs to the GARS family. It depends on Mg(2+) as a cofactor. Mn(2+) serves as cofactor.

The catalysed reaction is 5-phospho-beta-D-ribosylamine + glycine + ATP = N(1)-(5-phospho-beta-D-ribosyl)glycinamide + ADP + phosphate + H(+). It functions in the pathway purine metabolism; IMP biosynthesis via de novo pathway; N(1)-(5-phospho-D-ribosyl)glycinamide from 5-phospho-alpha-D-ribose 1-diphosphate: step 2/2. In Streptococcus pyogenes serotype M18 (strain MGAS8232), this protein is Phosphoribosylamine--glycine ligase.